The sequence spans 172 residues: Small ribosomal subunit protein uS5 (172 aa).

Positions 16 to 79 (LKDRLVAINR…ESAKKNLVKV (64 aa)) constitute an S5 DRBM domain.

This sequence belongs to the universal ribosomal protein uS5 family. In terms of assembly, part of the 30S ribosomal subunit. Contacts proteins S4 and S8.

With S4 and S12 plays an important role in translational accuracy. Functionally, located at the back of the 30S subunit body where it stabilizes the conformation of the head with respect to the body. In Bacteroides thetaiotaomicron (strain ATCC 29148 / DSM 2079 / JCM 5827 / CCUG 10774 / NCTC 10582 / VPI-5482 / E50), this protein is Small ribosomal subunit protein uS5.